The following is a 249-amino-acid chain: Triosephosphate isomerase (249 aa).

Residue 11–13 participates in substrate binding; it reads NWK. Histidine 91 functions as the Electrophile in the catalytic mechanism. Glutamate 163 functions as the Proton acceptor in the catalytic mechanism. Residues glycine 169, serine 208, and 229-230 each bind substrate; that span reads GG.

The protein belongs to the triosephosphate isomerase family. As to quaternary structure, homodimer.

Its subcellular location is the cytoplasm. The catalysed reaction is D-glyceraldehyde 3-phosphate = dihydroxyacetone phosphate. It participates in carbohydrate biosynthesis; gluconeogenesis. It functions in the pathway carbohydrate degradation; glycolysis; D-glyceraldehyde 3-phosphate from glycerone phosphate: step 1/1. Involved in the gluconeogenesis. Catalyzes stereospecifically the conversion of dihydroxyacetone phosphate (DHAP) to D-glyceraldehyde-3-phosphate (G3P). The chain is Triosephosphate isomerase from Pseudoalteromonas translucida (strain TAC 125).